Reading from the N-terminus, the 261-residue chain is 7beta-hydroxysteroid dehydrogenase (261 aa).

Residues 17–21 (TEGIG), 40–41 (RR), and 66–67 (DL) each bind NADP(+). The Proton acceptor role is filled by Y156.

Belongs to the short-chain dehydrogenases/reductases (SDR) family. In terms of assembly, homodimer.

It catalyses the reaction a 7beta-hydroxysteroid + NADP(+) = a 7-oxosteroid + NADPH + H(+). It carries out the reaction ursocholate + NADP(+) = 3alpha,12alpha-dihydroxy-7-oxo-5beta-cholanate + NADPH + H(+). The catalysed reaction is 7-oxolithocholate + NADPH + H(+) = ursodeoxycholate + NADP(+). The enzyme catalyses 3alpha,7beta-dihydroxy-12-oxo-5beta-cholan-24-oate + NADP(+) = 7,12-dioxo-lithocholate + NADPH + H(+). It catalyses the reaction 7beta-hydroxy-3,12-dioxo-5beta-cholan-24-oate + NADP(+) = dehydrocholate + NADPH + H(+). Functionally, 7beta-hydroxysteroid dehydrogenase that catalyzes the reduction of the 7-oxo group of 7-oxosteroids, such as 3alpha,12alpha-dihydroxy-7-oxo-5beta-cholanate, 7-oxolithocholate, 7,12-dioxo-lithocholate and dehydrocholate, to the corresponding 7beta-hydroxysteroids. Is also able to catalyze the reverse oxidation reactions. Together with 7alpha-HSDH encoded in the adjacent gene, is likely involved in the epimerization of the hydroxy group at C-7 of primary bile acids through 7-keto bile acid intermediates. In Clostridium sardiniense (Clostridium absonum), this protein is 7beta-hydroxysteroid dehydrogenase.